The following is a 457-amino-acid chain: Acetate--CoA ligase [ADP-forming] II subunit alpha (457 aa).

This sequence belongs to the acetate CoA ligase alpha subunit family. In terms of assembly, heterotetramer of two alpha and two beta subunits.

The catalysed reaction is acetate + ATP + CoA = acetyl-CoA + ADP + phosphate. Functionally, catalyzes the reversible formation of acetate and ATP from acetyl-CoA by using ADP and phosphate. Can use other substrates such as phenylacetyl-CoA, indoleacetyl-CoA and isobutyryl-CoA, but not succinyl-CoA. Seems to be involved primarily in the degradation of aryl-CoA esters to the corresponding acids. Participates in the conversion of acetyl-CoA to acetate and in the degradation of branched-chain amino acids via branched-chain-acyl-CoA esters. This is Acetate--CoA ligase [ADP-forming] II subunit alpha from Pyrococcus furiosus (strain ATCC 43587 / DSM 3638 / JCM 8422 / Vc1).